Consider the following 157-residue polypeptide: Protein Smg (157 aa).

It belongs to the Smg family.

This chain is Protein Smg, found in Serratia proteamaculans (strain 568).